A 151-amino-acid chain; its full sequence is Deoxyuridine 5'-triphosphate nucleotidohydrolase (151 aa).

Residues 70-72 (RSG), Asn-83, 87-89 (LID), and Met-97 contribute to the substrate site.

Belongs to the dUTPase family. Requires Mg(2+) as cofactor.

It carries out the reaction dUTP + H2O = dUMP + diphosphate + H(+). It functions in the pathway pyrimidine metabolism; dUMP biosynthesis; dUMP from dCTP (dUTP route): step 2/2. In terms of biological role, this enzyme is involved in nucleotide metabolism: it produces dUMP, the immediate precursor of thymidine nucleotides and it decreases the intracellular concentration of dUTP so that uracil cannot be incorporated into DNA. This is Deoxyuridine 5'-triphosphate nucleotidohydrolase from Actinobacillus pleuropneumoniae serotype 7 (strain AP76).